Here is a 204-residue protein sequence, read N- to C-terminus: Probable calcium-binding protein CML46 (204 aa).

EF-hand domains lie at 72–106, 132–167, and 170–204; these read LEFQ…LGLS, PSLE…LGLK, and SNLE…NNFC. Ca(2+)-binding residues include D145, N147, D149, and D156.

In terms of biological role, potential calcium sensor. In Arabidopsis thaliana (Mouse-ear cress), this protein is Probable calcium-binding protein CML46.